The primary structure comprises 344 residues: MRVIRPVEHADIAALMRLAGKTGGGLTSLPANEATLAARIERARKTWSDDLPKSEQGYVFVLEDSETGEVGGICAIEVAVGLNDPWYNYRVGTLVHASKELNVYNALPTLFLSNDHTGSSELCTLFLDPEWRKEGNGYVLSKSRFMFMAAFRDKFNEKVVAEMRGVIDEHGYSPFWQSLGKRFFSMDFSRADFLCGTGQKAFIAELMPKHPIYTHFLSEEAQAVIGEVHPQTAPARAVLEKEGFRYRHYIDIFDGGPTLECDIDRVRAIRKSRLVEIAEGQPAPGDYPACLVANENYHHFRAALVRADPQTSRLVFTAAQLDALKCRAGDHVRLVRLCAEEKTV.

A succinyl-CoA-binding site is contributed by leucine 125. The active-site Proton donor is the histidine 229.

This sequence belongs to the arginine N-succinyltransferase family.

The enzyme catalyses succinyl-CoA + L-arginine = N(2)-succinyl-L-arginine + CoA + H(+). The protein operates within amino-acid degradation; L-arginine degradation via AST pathway; L-glutamate and succinate from L-arginine: step 1/5. In terms of biological role, catalyzes the transfer of succinyl-CoA to arginine to produce N(2)-succinylarginine. This Salmonella arizonae (strain ATCC BAA-731 / CDC346-86 / RSK2980) protein is Arginine N-succinyltransferase.